The sequence spans 240 residues: Diglucosylglycerate octanoyltransferase (240 aa).

The protein belongs to the OctT acyltransferase family. As to quaternary structure, homotetramer.

It carries out the reaction (2R)-2-O-[alpha-D-glucopyranosyl-(1-&gt;6)-alpha-D-glucopyranosyl]-glycerate + octanoyl-CoA = (2R)-2-O-[6-O-octanoyl-alpha-D-glucopyranosyl-(1-&gt;6)-alpha-D-glucopyranosyl]-glycerate + CoA. Functionally, sugar octanoyltransferase likely involved in the biosynthesis of mycobacterial methylglucose lipopolysaccharide (MGLP). Catalyzes the transfer of an octanoyl group from octanoyl-CoA to the C6 OH of the second glucose in diglucosylglycerate (DGG). Can also use hexanoyl-CoA as acyl donor in vitro. DGG is the preferred acceptor, but to a lesser extent, GG (glucosylglycerate) can be used as substrate. DGG and GG are the two earliest intermediates in MGLP biosynthesis. The chain is Diglucosylglycerate octanoyltransferase from Mycolicibacterium hassiacum (strain DSM 44199 / CIP 105218 / JCM 12690 / 3849) (Mycobacterium hassiacum).